We begin with the raw amino-acid sequence, 488 residues long: UDP-glycosyltransferase 85A3 (488 aa).

Residues Ser-306, 363-365, 380-388, and 402-405 each bind UDP-alpha-D-glucose; these read CPQ, HCGWNSTLE, and FAEQ.

The protein belongs to the UDP-glycosyltransferase family. In terms of tissue distribution, expressed in roots and flowers.

In Arabidopsis thaliana (Mouse-ear cress), this protein is UDP-glycosyltransferase 85A3 (UGT85A3).